The following is a 566-amino-acid chain: Putative ankyrin repeat protein RF_0987 (566 aa).

Disordered stretches follow at residues 61 to 118, 276 to 314, and 355 to 392; these read KKKN…HENS, PPVM…SAEI, and VNNN…SEST. The segment covering 78–92 has biased composition (basic and acidic residues); sequence NQEEPKLASQEHTEA. Residues 101–112 show a composition bias toward polar residues; that stretch reads TGNTALPSVTAS. Over residues 296–308 the composition is skewed to low complexity; it reads TPVTTPSKVVPTT. Over residues 365–378 the composition is skewed to polar residues; sequence EKSPPVSSSNVTIQ. 2 ANK repeats span residues 506-535 and 539-566; these read SGET…KIST and ECQY…KGYQ.

This Rickettsia felis (strain ATCC VR-1525 / URRWXCal2) (Rickettsia azadi) protein is Putative ankyrin repeat protein RF_0987.